We begin with the raw amino-acid sequence, 160 residues long: Serine-protein kinase RsbW (160 aa).

Belongs to the anti-sigma-factor family.

The catalysed reaction is L-seryl-[protein] + ATP = O-phospho-L-seryl-[protein] + ADP + H(+). It carries out the reaction L-threonyl-[protein] + ATP = O-phospho-L-threonyl-[protein] + ADP + H(+). Negative regulator of sigma-B activity. Phosphorylates and inactivates its specific antagonist protein, RsbV. Upon phosphorylation of RsbV, RsbW is released and binds to sigma-B, thereby blocking its ability to form an RNA polymerase holoenzyme (E-sigma-B). This is Serine-protein kinase RsbW from Bacillus thuringiensis (strain Al Hakam).